Here is a 286-residue protein sequence, read N- to C-terminus: Thymidylate synthase (286 aa).

Arginine 27 lines the dUMP pocket. (6R)-5,10-methylene-5,6,7,8-tetrahydrofolate is bound at residue histidine 57. 148 to 149 (RR) contributes to the dUMP binding site. Cysteine 168 (nucleophile) is an active-site residue. DUMP is bound by residues 188-191 (RSAD), asparagine 199, and 229-231 (HLY). Residue aspartate 191 participates in (6R)-5,10-methylene-5,6,7,8-tetrahydrofolate binding. (6R)-5,10-methylene-5,6,7,8-tetrahydrofolate is bound at residue alanine 285.

The protein belongs to the thymidylate synthase family. Bacterial-type ThyA subfamily. As to quaternary structure, homodimer.

Its subcellular location is the cytoplasm. It carries out the reaction dUMP + (6R)-5,10-methylene-5,6,7,8-tetrahydrofolate = 7,8-dihydrofolate + dTMP. It participates in pyrimidine metabolism; dTTP biosynthesis. Its function is as follows. Catalyzes the reductive methylation of 2'-deoxyuridine-5'-monophosphate (dUMP) to 2'-deoxythymidine-5'-monophosphate (dTMP) while utilizing 5,10-methylenetetrahydrofolate (mTHF) as the methyl donor and reductant in the reaction, yielding dihydrofolate (DHF) as a by-product. This enzymatic reaction provides an intracellular de novo source of dTMP, an essential precursor for DNA biosynthesis. This chain is Thymidylate synthase, found in Psychrobacter sp. (strain PRwf-1).